Consider the following 260-residue polypeptide: Recombination-promoting nuclease RpnD (260 aa).

This sequence belongs to the Rpn/YhgA-like nuclease family.

In terms of biological role, a low activity DNA endonuclease probably yielding 3'-hydroxyl ends. Involved in RecA-independent recombination and horizontal gene transfer. The polypeptide is Recombination-promoting nuclease RpnD (rpnD) (Escherichia coli O157:H7).